We begin with the raw amino-acid sequence, 244 residues long: Eukaryotic translation initiation factor 6 (244 aa).

Residues serine 174 and serine 175 each carry the phosphoserine; by CK1 modification.

It belongs to the eIF-6 family. Monomer. Associates with the 60S ribosomal subunit. Phosphorylation at Ser-174 and Ser-175 promotes nuclear export.

The protein resides in the cytoplasm. The protein localises to the nucleus. Its subcellular location is the nucleolus. In terms of biological role, binds to the 60S ribosomal subunit and prevents its association with the 40S ribosomal subunit to form the 80S initiation complex in the cytoplasm. Is also involved in ribosome biogenesis. Associates with pre-60S subunits in the nucleus and is involved in its nuclear export. The protein is Eukaryotic translation initiation factor 6 (tif6) of Schizosaccharomyces pombe (strain 972 / ATCC 24843) (Fission yeast).